Consider the following 346-residue polypeptide: Phosphate acyltransferase (346 aa).

This sequence belongs to the PlsX family. As to quaternary structure, homodimer. Probably interacts with PlsY.

The protein localises to the cytoplasm. The catalysed reaction is a fatty acyl-[ACP] + phosphate = an acyl phosphate + holo-[ACP]. The protein operates within lipid metabolism; phospholipid metabolism. Functionally, catalyzes the reversible formation of acyl-phosphate (acyl-PO(4)) from acyl-[acyl-carrier-protein] (acyl-ACP). This enzyme utilizes acyl-ACP as fatty acyl donor, but not acyl-CoA. This chain is Phosphate acyltransferase, found in Psychromonas ingrahamii (strain DSM 17664 / CCUG 51855 / 37).